The chain runs to 221 residues: uncharacterized protein (221 aa).

Over 1 to 45 (MYAPIRSPITELNESTPSSIPVATSYATCSASFAKLVALLVDDMA) the chain is Extracellular. The chain crosses the membrane as a helical span at residues 46-66 (GLSIVLSEIYIYFKLLFLIVI). Residues 67-221 (TESIQNKLED…KYIVVIKVEQ (155 aa)) lie on the Cytoplasmic side of the membrane.

Its subcellular location is the host membrane. This is an uncharacterized protein from Acidianus filamentous virus 1 (isolate United States/Yellowstone) (AFV-1).